Consider the following 366-residue polypeptide: Ferrochelatase (366 aa).

Residues His209 and Glu290 each coordinate Fe cation.

It belongs to the ferrochelatase family.

It localises to the cytoplasm. The catalysed reaction is heme b + 2 H(+) = protoporphyrin IX + Fe(2+). It functions in the pathway porphyrin-containing compound metabolism; protoheme biosynthesis; protoheme from protoporphyrin-IX: step 1/1. In terms of biological role, catalyzes the ferrous insertion into protoporphyrin IX. The sequence is that of Ferrochelatase from Teredinibacter turnerae (strain ATCC 39867 / T7901).